We begin with the raw amino-acid sequence, 578 residues long: Phenylalanine--tRNA ligase beta subunit (578 aa).

One can recognise a B5 domain in the interval 292–370 (FDTDEKSVSH…RAYGFDNLEP (79 aa)). 4 residues coordinate Mg(2+): aspartate 348, aspartate 354, aspartate 357, and aspartate 358.

The protein belongs to the phenylalanyl-tRNA synthetase beta subunit family. Type 2 subfamily. As to quaternary structure, tetramer of two alpha and two beta subunits. Requires Mg(2+) as cofactor.

It localises to the cytoplasm. It carries out the reaction tRNA(Phe) + L-phenylalanine + ATP = L-phenylalanyl-tRNA(Phe) + AMP + diphosphate + H(+). The polypeptide is Phenylalanine--tRNA ligase beta subunit (Halorubrum lacusprofundi (strain ATCC 49239 / DSM 5036 / JCM 8891 / ACAM 34)).